A 373-amino-acid polypeptide reads, in one-letter code: Phosphoserine aminotransferase (373 aa).

Arg-46 is an L-glutamate binding site. Residues Phe-104, Thr-150, Asp-172, and Gln-195 each contribute to the pyridoxal 5'-phosphate site. Lys-196 bears the N6-(pyridoxal phosphate)lysine mark. 247–248 (NT) is a pyridoxal 5'-phosphate binding site.

Belongs to the class-V pyridoxal-phosphate-dependent aminotransferase family. SerC subfamily. In terms of assembly, homodimer. The cofactor is pyridoxal 5'-phosphate.

It localises to the cytoplasm. The enzyme catalyses O-phospho-L-serine + 2-oxoglutarate = 3-phosphooxypyruvate + L-glutamate. The catalysed reaction is 4-(phosphooxy)-L-threonine + 2-oxoglutarate = (R)-3-hydroxy-2-oxo-4-phosphooxybutanoate + L-glutamate. It participates in amino-acid biosynthesis; L-serine biosynthesis; L-serine from 3-phospho-D-glycerate: step 2/3. Its pathway is cofactor biosynthesis; pyridoxine 5'-phosphate biosynthesis; pyridoxine 5'-phosphate from D-erythrose 4-phosphate: step 3/5. In terms of biological role, catalyzes the reversible conversion of 3-phosphohydroxypyruvate to phosphoserine and of 3-hydroxy-2-oxo-4-phosphonooxybutanoate to phosphohydroxythreonine. In Rhodococcus opacus (strain B4), this protein is Phosphoserine aminotransferase.